Consider the following 1179-residue polypeptide: MARRSQSSSQGDNPLAPGYLPPHYKEYYRLAVDALAEGGSEAYSRFLATEGAPDFLCPEELEHVSRHLRPPQYVTREPPEGSLLDVDMDGSSGTYWPVNSDQAVPELDLGWPLTFGFQGTEVTTLVQPPPPDSPSIKDEARRMIRSAQQVVAVVMDMFTDVDLLSEVLEAAARRVPVYILLDEMNAQHFLDMADKCRVNLQHVDFLRVRTVAGPTYYCRTGKSFKGHVKEKFLLVDCAVVMSGSYSFMWSFEKIHRSLAHVFQGELVSSFDEEFRILFAQSEPLVPSAAALARMDAYALAPYAGAGPLVGVPGVGAPTPFSFPKRAHLLFPPPREEGLGFPSFLDPDRHFLSAFRREEPPRMPGGALEPHAGLRPLSRRLEAEAGPAGELAGARGFFQARHLEMDAFKRHSFATEGAGAVENFAAARQVSRQTFLSHGDDFRFQTSHFHRDQLYQQQYQWDPQLTPARPQGLFEKLRGGRAGFADPDDFTLGAGPRFPELGPDGHQRLDYVPSSASREVRHGSDPAFAPGPRGLEPSGAPRPNLTQRFPCQAAARPGPDPAPEAEPERRGGPEGRAGLRRWRLASYLSGCHGEDGGDDGLPAPMEAEAYEDDVLAPGGRAPAGDLLPSAFRVPAAFPTKVPVPGPGSGGNGPEREGPEEPGLAKQDSFRSRLNPLVQRSSRLRSSLIFSTSQAEGAAGAAAATEKVQLLHKEQTVSETLGPGGEAVRSAASTKVAELLEKYKGPARDPGGGAGAITVASHSKAVVSQAWREEVAAPGAVGGERRSLESCLLDLRDSFAQQLHQEAERQPGAASLTAAQLLDTLGRSGSDRLPSRFLSAQSHSTSPQGLDSPLPLEGSGAHQVLHNESKGSPTSAYPERKGSPTPGFSTRRGSPTTGFIEQKGSPTSAYPERRGSPVPPVPERRSSPVPPVPERRGSLTLTISGESPKAGPAEEGPSGPMEVLRKGSLRLRQLLSPKGERRMEDEGGFPVPQENGQPESPRRLSLGQGDSTEAATEERGPRARLSSATANALYSSNLRDDTKAILEQISAHGQKHRAVPAPSPGPTHNSPELGRPPAAGVLAPDMSDKDKCSAIFRSDSLGTQGRLSRTLPASAEERDRLLRRMESMRKEKRVYSRFEVFCKKEEASSPGAGEGPAEEGTRDSKVGKFVPKILGTFKSKK.

Positions 1-286 (MARRSQSSSQ…LFAQSEPLVP (286 aa)) are DUF1669. The mediates interaction with CSNK1A1 and is required for FAM83H activity in keratin cytoskeleton organization stretch occupies residues 1 to 286 (MARRSQSSSQ…LFAQSEPLVP (286 aa)). Phosphothreonine is present on Thr-465. Disordered regions lie at residues 484 to 577 (ADPD…GRAG) and 636 to 669 (FPTK…DSFR). A phosphoserine mark is found at Ser-513, Ser-514, Ser-516, Ser-523, Ser-647, and Ser-667. Thr-756 is subject to Phosphothreonine. Phosphoserine occurs at positions 759, 785, and 813. The segment at 830–1026 (RLPSRFLSAQ…RGPRARLSSA (197 aa)) is disordered. Over residues 836–847 (LSAQSHSTSPQG) the composition is skewed to polar residues. 2 positions are modified to phosphoserine: Ser-870 and Ser-881. Position 883 is a phosphothreonine (Thr-883). Residues 884 to 906 (PGFSTRRGSPTTGFIEQKGSPTS) are compositionally biased toward polar residues. Ser-892 is modified (phosphoserine). Phosphothreonine is present on Thr-894. Ser-903, Ser-914, Ser-925, Ser-936, Ser-945, Ser-1003, Ser-1009, Ser-1024, and Ser-1025 each carry phosphoserine. At Thr-1040 the chain carries Phosphothreonine. 2 disordered regions span residues 1047–1084 (ISAH…APDM) and 1143–1165 (EEAS…SKVG). Residues Ser-1048, Ser-1068, and Ser-1147 each carry the phosphoserine modification.

It belongs to the FAM83 family. As to quaternary structure, directly interacts (via DUF1669) with casein kinase isoforms CSNK1A1, CSNK1A1L, CSNK1D and CSNK1E. Interaction with CSNK1A1 recruits CSNK1A1 to keratin filaments. Interacts with KRT18 and probably other keratins. Expressed in the tooth follicle.

The protein resides in the cytoplasm. It is found in the cytoskeleton. Its function is as follows. May play a major role in the structural organization and calcification of developing enamel. May play a role in keratin cytoskeleton disassembly by recruiting CSNK1A1 to keratin filaments. Thereby, it may regulate epithelial cell migration. This chain is Protein FAM83H, found in Homo sapiens (Human).